A 403-amino-acid polypeptide reads, in one-letter code: Na(+)/H(+) antiporter NhaH (403 aa).

Over 1–6 the chain is Cytoplasmic; it reads MHGFHD. The chain crosses the membrane as a helical span at residues 7-27; it reads VFIQILLLLAISVSVIAIAKL. Residues 28-30 lie on the Extracellular side of the membrane; the sequence is LKE. Residues 31–51 traverse the membrane as a helical segment; sequence PDSIALVLVGLVLGLTELPII. Residues 52-65 are Cytoplasmic-facing; that stretch reads EDAERYITQSEVFQ. A helical membrane pass occupies residues 66–86; that stretch reads ATIISLFLPILLGDATLKLPF. Topologically, residues 87–98 are extracellular; that stretch reads HHLFSQKKTVLG. Residues 99 to 119 traverse the membrane as a helical segment; it reads LAFVGTFVSSICIGTAAYFLL. Residues 120 to 124 are Cytoplasmic-facing; that stretch reads DLPLA. The chain crosses the membrane as a helical span at residues 125 to 145; it reads VAFTFAALMSATDPISVLSIF. The Extracellular portion of the chain corresponds to 146-167; the sequence is KSLGVPQKMSTVMEGESLFNDG. Residues 168 to 188 form a helical membrane-spanning segment; it reads IAVVLFKIASIYLLTYMEMGW. At 189-195 the chain is on the cytoplasmic side; the sequence is AGLGSGV. Residues 196 to 216 form a helical membrane-spanning segment; that stretch reads FLFLKFAIGGALVGLVLGYFF. Over 217–218 the chain is Extracellular; the sequence is SQ. The chain crosses the membrane as a helical span at residues 219–239; sequence VIRVFDDYPLEVAFSALLFFG. Residues 240–241 lie on the Cytoplasmic side of the membrane; the sequence is SY. Residues 242-262 form a helical membrane-spanning segment; sequence FIAEHFHTSGVIAVVVGGFVF. The Extracellular portion of the chain corresponds to 263 to 281; the sequence is GDYGAKIGMSKETKTNINT. A helical membrane pass occupies residues 282-302; that stretch reads FWDSVTLIANALIFLMVGLEI. The Cytoplasmic segment spans residues 303 to 310; the sequence is RNIDLAGN. A helical membrane pass occupies residues 311 to 331; it reads WGVIVGAILIVLVGRTIAVYL. Residues 332–372 lie on the Extracellular side of the membrane; sequence GTGWVQELSSKERLLINWGGLRGSLSVALALSLPMDFAGRD. The chain crosses the membrane as a helical span at residues 373–393; sequence QVLLLTFSVVLFSLIVQGLTL. The Cytoplasmic portion of the chain corresponds to 394-403; sequence KPLIKKLGMI.

It belongs to the monovalent cation:proton antiporter 1 (CPA1) transporter (TC 2.A.36) family.

Its subcellular location is the cell membrane. Na(+)/H(+) antiporter that extrudes sodium in exchange for external protons. Can also transport lithium. The polypeptide is Na(+)/H(+) antiporter NhaH (nhaH) (Halobacillus dabanensis).